We begin with the raw amino-acid sequence, 164 residues long: FMN reductase (NADH) RutF (164 aa).

This sequence belongs to the non-flavoprotein flavin reductase family. RutF subfamily.

It carries out the reaction FMNH2 + NAD(+) = FMN + NADH + 2 H(+). Its function is as follows. Catalyzes the reduction of FMN to FMNH2 which is used to reduce pyrimidine by RutA via the Rut pathway. This Escherichia coli (strain K12 / MC4100 / BW2952) protein is FMN reductase (NADH) RutF.